An 825-amino-acid polypeptide reads, in one-letter code: Cytosolic phospholipase A2 delta (825 aa).

The C2 domain maps to 14–133 (SPERLHGHPY…LPGQLLQKTF (120 aa)). Ca(2+) is bound by residues D47, D53, D103, D105, and D111. In terms of domain architecture, PLA2c spans 281 to 825 (DCCPKELSVR…SETRPLGVKT (545 aa)). Substrate is bound at residue 339 to 340 (GG). Residue S370 is the Nucleophile of the active site. Residue D654 is the Proton acceptor of the active site.

The cofactor is Ca(2+). As to expression, weakly or not expressed in most tissues. Detected in placenta of 17.5 dpc embryos.

The protein localises to the cytoplasm. Its subcellular location is the cytosol. It is found in the membrane. It carries out the reaction a 1,2-diacyl-sn-glycero-3-phosphocholine + H2O = a 1-acyl-sn-glycero-3-phosphocholine + a fatty acid + H(+). The enzyme catalyses 1-hexadecanoyl-2-(5Z,8Z,11Z,14Z-eicosatetraenoyl)-sn-glycero-3-phosphocholine + H2O = 1-hexadecanoyl-sn-glycero-3-phosphocholine + (5Z,8Z,11Z,14Z)-eicosatetraenoate + H(+). The catalysed reaction is 1-hexadecanoyl-2-(9Z,12Z-octadecadienoyl)-sn-glycero-3-phosphocholine + H2O = (9Z,12Z)-octadecadienoate + 1-hexadecanoyl-sn-glycero-3-phosphocholine + H(+). It catalyses the reaction 1-hexadecanoyl-2-(9Z-octadecenoyl)-sn-glycero-3-phosphocholine + H2O = 1-hexadecanoyl-sn-glycero-3-phosphocholine + (9Z)-octadecenoate + H(+). It carries out the reaction 1-hexadecanoyl-2-(5Z,8Z,11Z,14Z-eicosatetraenoyl)-sn-glycero-3-phosphoethanolamine + H2O = 1-hexadecanoyl-sn-glycero-3-phosphoethanolamine + (5Z,8Z,11Z,14Z)-eicosatetraenoate + H(+). The enzyme catalyses 1-hexadecanoyl-2-(9Z,12Z-octadecadienoyl)-sn-glycero-3-phosphoethanolamine + H2O = 1-hexadecanoyl-sn-glycero-3-phosphoethanolamine + (9Z,12Z)-octadecadienoate + H(+). The catalysed reaction is 1-hexadecanoyl-sn-glycero-3-phosphocholine + H2O = sn-glycerol 3-phosphocholine + hexadecanoate + H(+). It functions in the pathway lipid metabolism; fatty acid metabolism. Stimulated by cytosolic Ca(2+). Functionally, calcium-dependent phospholipase A2 that selectively hydrolyzes glycerophospholipids in the sn-2 position. Compared to its human ortholog, may have no preference for the fatty acid found at the sn-2 position. In Mus musculus (Mouse), this protein is Cytosolic phospholipase A2 delta.